The following is a 140-amino-acid chain: Nucleoside diphosphate kinase (140 aa).

Lys-11, Phe-59, Arg-87, Thr-93, Arg-104, and Asn-114 together coordinate ATP. Residue His-117 is the Pros-phosphohistidine intermediate of the active site.

Belongs to the NDK family. In terms of assembly, homotetramer. Requires Mg(2+) as cofactor.

It localises to the cytoplasm. The catalysed reaction is a 2'-deoxyribonucleoside 5'-diphosphate + ATP = a 2'-deoxyribonucleoside 5'-triphosphate + ADP. It carries out the reaction a ribonucleoside 5'-diphosphate + ATP = a ribonucleoside 5'-triphosphate + ADP. In terms of biological role, major role in the synthesis of nucleoside triphosphates other than ATP. The ATP gamma phosphate is transferred to the NDP beta phosphate via a ping-pong mechanism, using a phosphorylated active-site intermediate. The chain is Nucleoside diphosphate kinase from Bradyrhizobium sp. (strain ORS 278).